A 629-amino-acid polypeptide reads, in one-letter code: Polyadenylate-binding protein, cytoplasmic and nuclear (629 aa).

Over residues 1 to 11 (MSAAETNQLQE) the composition is skewed to polar residues. The segment at 1–48 (MSAAETNQLQESMEKLNIGSTTEEQSAAAATTTADQSAEEQGESSGVA) is disordered. A compositionally biased stretch (low complexity) spans 20–36 (STTEEQSAAAATTTADQ). RRM domains lie at 52–130 (ASLY…WSQR), 140–217 (GNIF…KHIS), 233–310 (TNIY…RAQK), and 336–413 (VNLF…LAQR). Residues 503–534 (PPQFQQDFNGQNMRPQQQQQQQPRGGYYPNRN) are disordered. A compositionally biased stretch (polar residues) spans 505–517 (QFQQDFNGQNMRP). The 82-residue stretch at 537-618 (SKRDLAAIIS…ALTAFEEYKK (82 aa)) folds into the PABC domain.

This sequence belongs to the polyadenylate-binding protein type-1 family.

Its subcellular location is the cytoplasm. It is found in the nucleus. Its function is as follows. Binds the poly(A) tail of mRNA. Appears to be an important mediator of the multiple roles of the poly(A) tail in mRNA biogenesis, stability and translation. In the nucleus, involved in both mRNA cleavage and polyadenylation. Is also required for efficient mRNA export to the cytoplasm. Acts in concert with a poly(A)-specific nuclease (PAN) to affect poly(A) tail shortening, which may occur concomitantly with either nucleocytoplasmic mRNA transport or translational initiation. In the cytoplasm, stimulates translation initiation and regulates mRNA decay through translation termination-coupled poly(A) shortening, probably mediated by PAN. This Candida albicans (strain SC5314 / ATCC MYA-2876) (Yeast) protein is Polyadenylate-binding protein, cytoplasmic and nuclear (PAB1).